Reading from the N-terminus, the 192-residue chain is Glutaredoxin-C9 (192 aa).

Residues 89–191 enclose the Glutaredoxin domain; sequence YERVARMASG…PLLKQAGALW (103 aa). A disulfide bond links C109 and C112. A Responsive for interaction with TGA factors motif is present at residues 189–192; sequence ALWL.

It belongs to the glutaredoxin family. CC-type subfamily.

It localises to the cytoplasm. The protein localises to the nucleus. Its function is as follows. Has a glutathione-disulfide oxidoreductase activity in the presence of NADPH and glutathione reductase. Reduces low molecular weight disulfides and proteins. This chain is Glutaredoxin-C9 (GRXC9), found in Oryza sativa subsp. japonica (Rice).